The chain runs to 137 residues: ATP synthase epsilon chain (137 aa).

The protein belongs to the ATPase epsilon chain family. As to quaternary structure, F-type ATPases have 2 components, CF(1) - the catalytic core - and CF(0) - the membrane proton channel. CF(1) has five subunits: alpha(3), beta(3), gamma(1), delta(1), epsilon(1). CF(0) has three main subunits: a, b and c.

The protein localises to the cellular thylakoid membrane. In terms of biological role, produces ATP from ADP in the presence of a proton gradient across the membrane. This is ATP synthase epsilon chain (atpC) from Synechococcus elongatus (strain ATCC 33912 / PCC 7942 / FACHB-805) (Anacystis nidulans R2).